The primary structure comprises 168 residues: Putative gustatory receptor clone PTE03 (168 aa).

Over 1 to 25 (TTVPKMLINLQKQNKAISYAGCITQ) the chain is Extracellular. C22 and C104 are disulfide-bonded. A helical transmembrane segment spans residues 26–45 (LSFVLLFAGMENFLLAAMAY). Over 46 to 67 (DRYVAICKPLRYTAIMKAHLCL) the chain is Cytoplasmic. A helical membrane pass occupies residues 68–88 (VMTLLSLCISIVDALLHGLMI). The Extracellular segment spans residues 89 to 121 (LRLSFCTFLEIPHYFCELYQVIKLSCSDTLINN). The chain crosses the membrane as a helical span at residues 122-143 (ILVYTMTSTLGGVPLGGIIFSY). Topologically, residues 144-165 (FKIISSILRMPSSGSRHRAFST) are cytoplasmic. The chain crosses the membrane as a helical span at residues 166–168 (CGS).

Belongs to the G-protein coupled receptor 1 family. In terms of tissue distribution, tongue specific.

The protein localises to the cell membrane. Possible taste receptor. In Rattus norvegicus (Rat), this protein is Putative gustatory receptor clone PTE03 (Olr1145).